The primary structure comprises 746 residues: Exostosin-1 (746 aa).

The Cytoplasmic portion of the chain corresponds to 1 to 7; that stretch reads MQAKKRY. Residues 8–28 traverse the membrane as a helical; Signal-anchor for type II membrane protein segment; it reads FILLSAGSCLALLFYFGGVQF. The Lumenal segment spans residues 29-746; the sequence is RASRSHSRRE…RKKYRDIERL (718 aa). Asparagine 89 carries an N-linked (GlcNAc...) asparagine glycan. Intrachain disulfides connect cysteine 98–cysteine 103 and cysteine 109–cysteine 152. Residues leucine 166 and tyrosine 203 each coordinate a protein. UDP-binding residues include lysine 267, lysine 269, tyrosine 271, and arginine 280. The cysteines at positions 298 and 312 are disulfide-linked. Histidine 300 is a binding site for a protein. Positions 319 and 324 each coordinate UDP. Asparagine 330 is a glycosylation site (N-linked (GlcNAc...) asparagine). Disulfide bonds link cysteine 334/cysteine 355 and cysteine 652/cysteine 704. The UDP site is built by arginine 346 and glutamate 349.

Belongs to the glycosyltransferase 47 family. Part of the heparan sulfate polymerase, a dimeric complex composed of EXT1 and EXT2. Could also form homooligomeric complexes. Interacts with NDST1. N-glycosylated.

Its subcellular location is the golgi apparatus membrane. The protein localises to the golgi apparatus. It is found in the cis-Golgi network membrane. It localises to the endoplasmic reticulum membrane. The catalysed reaction is 3-O-{alpha-D-GlcNAc-[(1-&gt;4)-beta-D-GlcA-(1-&gt;4)-alpha-D-GlcNAc](n)-(1-&gt;4)-beta-D-GlcA-(1-&gt;3)-beta-D-Gal-(1-&gt;3)-beta-D-Gal-(1-&gt;4)-beta-D-Xyl}-L-seryl-[protein] + UDP-alpha-D-glucuronate = 3-O-{[(1-&gt;4)-beta-D-GlcA-(1-&gt;4)-alpha-D-GlcNAc](n+1)-(1-&gt;4)-beta-D-GlcA-(1-&gt;3)-beta-D-Gal-(1-&gt;3)-beta-D-Gal-(1-&gt;4)-beta-D-Xyl}-L-seryl-[protein] + UDP + H(+). It functions in the pathway protein modification; protein glycosylation. In terms of biological role, glycosyltransferase forming with EXT2 the heterodimeric heparan sulfate polymerase which catalyzes the elongation of the heparan sulfate glycan backbone. Glycan backbone extension consists in the alternating transfer of (1-&gt;4)-beta-D-GlcA and (1-&gt;4)-alpha-D-GlcNAc residues from their respective UDP-sugar donors. Both EXT1 and EXT2 are required for the full activity of the polymerase since EXT1 bears the N-acetylglucosaminyl-proteoglycan 4-beta-glucuronosyltransferase activity within the complex while EXT2 carries the glucuronosyl-N-acetylglucosaminyl-proteoglycan 4-alpha-N-acetylglucosaminyltransferase activity. Heparan sulfate proteoglycans are ubiquitous components of the extracellular matrix and play an important role in tissue homeostasis and signaling. The sequence is that of Exostosin-1 from Mus musculus (Mouse).